The sequence spans 181 residues: Phospholipase A2 inhibitor gamma subunit B (181 aa).

8 disulfides stabilise this stretch: Cys3-Cys27, Cys6-Cys13, Cys20-Cys48, Cys54-Cys75, Cys76-Cys81, Cys101-Cys126, Cys119-Cys146, and Cys152-Cys172.

It belongs to the CNF-like-inhibitor family. Heterotrimer of 2 subunits A and 1 subunit B. In terms of tissue distribution, expressed by the liver.

Its subcellular location is the secreted. In terms of biological role, strongly inhibits its own venom PLA2 and all other PLA2s tested including Elapid, Crotalid and Viperid venom PLA2s, as well as honeybee PLA2s. This is Phospholipase A2 inhibitor gamma subunit B from Laticauda semifasciata (Black-banded sea krait).